Here is a 220-residue protein sequence, read N- to C-terminus: 7-cyano-7-deazaguanine synthase (220 aa).

Residue 11–21 (VSGGMDSVTLM) participates in ATP binding. Cysteine 186, cysteine 194, cysteine 197, and cysteine 200 together coordinate Zn(2+).

It belongs to the QueC family. Zn(2+) is required as a cofactor.

It carries out the reaction 7-carboxy-7-deazaguanine + NH4(+) + ATP = 7-cyano-7-deazaguanine + ADP + phosphate + H2O + H(+). The protein operates within purine metabolism; 7-cyano-7-deazaguanine biosynthesis. In terms of biological role, catalyzes the ATP-dependent conversion of 7-carboxy-7-deazaguanine (CDG) to 7-cyano-7-deazaguanine (preQ(0)). This Porphyromonas gingivalis (strain ATCC BAA-308 / W83) protein is 7-cyano-7-deazaguanine synthase.